The sequence spans 202 residues: N-(5'-phosphoribosyl)anthranilate isomerase (202 aa).

The protein belongs to the TrpF family.

The enzyme catalyses N-(5-phospho-beta-D-ribosyl)anthranilate = 1-(2-carboxyphenylamino)-1-deoxy-D-ribulose 5-phosphate. Its pathway is amino-acid biosynthesis; L-tryptophan biosynthesis; L-tryptophan from chorismate: step 3/5. The chain is N-(5'-phosphoribosyl)anthranilate isomerase from Bacillus cereus (strain ATCC 14579 / DSM 31 / CCUG 7414 / JCM 2152 / NBRC 15305 / NCIMB 9373 / NCTC 2599 / NRRL B-3711).